Here is a 447-residue protein sequence, read N- to C-terminus: Tubulin beta-4 chain (447 aa).

8 residues coordinate GTP: Q11, E71, S140, G144, T145, G146, N206, and N228. Position 71 (E71) interacts with Mg(2+). The tract at residues 428–447 is disordered; it reads QDATAEEYEEEEHDGEEEHA. Positions 431–447 are enriched in acidic residues; that stretch reads TAEEYEEEEHDGEEEHA.

It belongs to the tubulin family. As to quaternary structure, dimer of alpha and beta chains. A typical microtubule is a hollow water-filled tube with an outer diameter of 25 nm and an inner diameter of 15 nM. Alpha-beta heterodimers associate head-to-tail to form protofilaments running lengthwise along the microtubule wall with the beta-tubulin subunit facing the microtubule plus end conferring a structural polarity. Microtubules usually have 13 protofilaments but different protofilament numbers can be found in some organisms and specialized cells. The cofactor is Mg(2+).

The protein resides in the cytoplasm. The protein localises to the cytoskeleton. Its function is as follows. Tubulin is the major constituent of microtubules, a cylinder consisting of laterally associated linear protofilaments composed of alpha- and beta-tubulin heterodimers. Microtubules grow by the addition of GTP-tubulin dimers to the microtubule end, where a stabilizing cap forms. Below the cap, tubulin dimers are in GDP-bound state, owing to GTPase activity of alpha-tubulin. This Zea mays (Maize) protein is Tubulin beta-4 chain (TUBB4).